Here is a 235-residue protein sequence, read N- to C-terminus: MRDLLQYIACFFAFFSAGFLIVATWTDCWMVNADDSLEVSTKCRGLWWECVTNAFDGIRTCDEYDSILAEHPLKLVVTRALMITADILAGFGFLTLLLGLDCVKFLPDEPYIKVRICFVAGATLLIAGTPGIIGSVWYAVDVYVERSTLVLHNIFLGIQYKFGWSCWLGMAGSLGCFLAGAVLTCCLYLFKDVGPERNYPYSLRKAYSAAGVSMAKSYSAPRTETAKMYAVDTRV.

Residues 1-3 (MRD) lie on the Cytoplasmic side of the membrane. The helical transmembrane segment at 4-24 (LLQYIACFFAFFSAGFLIVAT) threads the bilayer. Topologically, residues 25-79 (WTDCWMVNADDSLEVSTKCRGLWWECVTNAFDGIRTCDEYDSILAEHPLKLVVTR) are extracellular. The helical transmembrane segment at 80-100 (ALMITADILAGFGFLTLLLGL) threads the bilayer. The Cytoplasmic portion of the chain corresponds to 101-115 (DCVKFLPDEPYIKVR). The chain crosses the membrane as a helical span at residues 116–136 (ICFVAGATLLIAGTPGIIGSV). At 137-169 (WYAVDVYVERSTLVLHNIFLGIQYKFGWSCWLG) the chain is on the extracellular side. Residues 170–190 (MAGSLGCFLAGAVLTCCLYLF) form a helical membrane-spanning segment. Residues 191-235 (KDVGPERNYPYSLRKAYSAAGVSMAKSYSAPRTETAKMYAVDTRV) lie on the Cytoplasmic side of the membrane. Residues 233–235 (TRV) carry the Interaction with TJP1 motif.

Belongs to the claudin family. As to quaternary structure, can form heteropolymeric tight junction strands with other claudins. Interacts with CLDN19. Interacts (via PDZ-binding motif TRV) with TJP1 (via PDZ domain). Cannot form tight junction strands on its own. Kidney-specific, including the thick ascending limb of Henle (TAL).

The protein localises to the cell junction. Its subcellular location is the tight junction. The protein resides in the cell membrane. The enzyme catalyses Mg(2+)(in) = Mg(2+)(out). It carries out the reaction Ca(2+)(in) = Ca(2+)(out). It catalyses the reaction Na(+)(in) = Na(+)(out). The catalysed reaction is K(+)(in) = K(+)(out). The enzyme catalyses Rb(+)(in) = Rb(+)(out). It carries out the reaction Cs(+)(in) = Cs(+)(out). It catalyses the reaction Li(+)(in) = Li(+)(out). Functionally, forms paracellular channels: coassembles with CLDN19 into tight junction strands with cation-selective channels through the strands, conveying epithelial permeability in a process known as paracellular tight junction permeability. Involved in the maintenance of ion gradients along the nephron. In the thick ascending limb (TAL) of Henle's loop, facilitates sodium paracellular permeability from the interstitial compartment to the lumen, contributing to the lumen-positive transepithelial potential that drives paracellular magnesium and calcium reabsorption. The sequence is that of Claudin-16 from Homo sapiens (Human).